The primary structure comprises 437 residues: MEISAKLTNSANALASTKIPTASINEKVNELAKQTAKKVRIDGFRPGKAPVAAVLKRYKKELEDDAKNDIFRNFVDESLKILGKEKNEILGEPIFSKYEEKDGIIDVEMKMSFRPEVKIDGYEKFIPEFATPRVTKKEIDEKINEFLLMIAPLEKSDKEVLEKGDFAKFDFEGFVDDKPFDGGKAQDYVLEIGSGRFIPGFEDGMLGMKIDEERDIKVKFPENYQAENLAGKDAIFKVKLHEIQCKKIGELDDETLKRLMPGEKEPSKEKFEAQIKEQIRADKMAKLINEELKPKFADIIVENFIFDMPEIILEQEIDLQFRNAWGTFSKEEIENFRKDKDALTKKRDEFRDEAVKSVKMTFLIDEIAKDRKIQVSDQELVSAVYMEAYRYGMDPKKHLEEYRTNGYLPVVKMALLEEKLFNDIFSKDKKSEKTEEK.

The PPIase FKBP-type domain maps to 164–249; sequence GDFAKFDFEG…LHEIQCKKIG (86 aa).

Belongs to the FKBP-type PPIase family. Tig subfamily.

It localises to the cytoplasm. It catalyses the reaction [protein]-peptidylproline (omega=180) = [protein]-peptidylproline (omega=0). Its function is as follows. Involved in protein export. Acts as a chaperone by maintaining the newly synthesized protein in an open conformation. Functions as a peptidyl-prolyl cis-trans isomerase. The protein is Trigger factor of Campylobacter hominis (strain ATCC BAA-381 / DSM 21671 / CCUG 45161 / LMG 19568 / NCTC 13146 / CH001A).